We begin with the raw amino-acid sequence, 68 residues long: Conotoxin ArMMSK-01 (68 aa).

A signal peptide spans 1 to 20 (MMSKLGVLLTICMLLFPLTA). Positions 21–51 (LPLDGDQPADRPAERMQDDFISEQHPLFNPI) are excised as a propeptide. Disulfide bonds link Cys-54–Cys-67, Cys-55–Cys-63, and Cys-59–Cys-66. At Pro-65 the chain carries 4-hydroxyproline.

Belongs to the conotoxin M superfamily. Expressed by the venom duct.

The protein localises to the secreted. The polypeptide is Conotoxin ArMMSK-01 (Conus arenatus (Sand-dusted cone)).